The sequence spans 108 residues: UPF0145 protein gll1048 (108 aa).

Belongs to the UPF0145 family.

The sequence is that of UPF0145 protein gll1048 from Gloeobacter violaceus (strain ATCC 29082 / PCC 7421).